Here is a 152-residue protein sequence, read N- to C-terminus: Erythema protein SVEP (152 aa).

A signal peptide spans 1–18 (MSITQSFFVLTLAIFGAA).

Salivary gland (at protein level).

It localises to the secreted. Salivary vasoactive peptide; induces vasodilatation in bioassay with rabbit aortic rings. This chain is Erythema protein SVEP, found in Simulium vittatum (Striped black fly).